A 131-amino-acid polypeptide reads, in one-letter code: Lymphocyte antigen 6C2 (131 aa).

An N-terminal signal peptide occupies residues 1 to 26; sequence MDSTHATKSCLLILLVALLCAGRAQG. A UPAR/Ly6 domain is found at 27–116; it reads LQCYECYGVP…TAGSTWTMAG (90 aa). Disulfide bonds link Cys-29–Cys-53, Cys-32–Cys-41, Cys-46–Cys-74, Cys-78–Cys-95, and Cys-96–Cys-101. Gly-109 carries GPI-anchor amidated glycine lipidation. Positions 110 to 131 are cleaved as a propeptide — removed in mature form; that stretch reads STWTMAGVLLFSLSSVILQTLL.

It is found in the cell membrane. In Mus musculus (Mouse), this protein is Lymphocyte antigen 6C2 (Ly6c2).